Here is a 186-residue protein sequence, read N- to C-terminus: Biofilm operon icaADBC HTH-type negative transcriptional regulator IcaR (186 aa).

The HTH tetR-type domain maps to 1 to 59 (MKDKIIDNAITLFSEKGYDGTTLDDIAKSVNIKKASLYYHFDSKKSIYEQSVKCCFDYL). Positions 22–41 (TLDDIAKSVNIKKASLYYHF) form a DNA-binding region, H-T-H motif.

In terms of assembly, homodimer.

Functionally, represses transcription of the icaADBC operon necessary for biofilm production. The chain is Biofilm operon icaADBC HTH-type negative transcriptional regulator IcaR (icaR) from Staphylococcus aureus (strain NCTC 8325 / PS 47).